The following is a 509-amino-acid chain: O-acetyltransferase anaAT (509 aa).

This sequence belongs to the fumigaclavine B O-acetyltransferase family. Monomer.

The enzyme catalyses (2R,3S,11R)-aszonalenin + acetyl-CoA = (2R,3S,11R)-acetylaszonalenin + CoA. The protein operates within alkaloid biosynthesis. O-acetyltransferase; part of the gene cluster that mediates the biosynthesis of the prenylated pyrroloindoline diketopiperazine acetylaszonalenin. The first step in the pathway is the formation of (R)-benzodiazepinedione by condensation of tryptophan and anthranilic acid catalyzed by the non-ribosomal peptide synthetase anaPS. The prenyltransferase anaPT then converts (R)-benzodiazepinedione to aszonalenin in the presence of dimethylallyl diphosphate (DMAPP) via C3-prenylation. The last step in the biosynthesis of acetylaszonalenin via acetylation of aszonalenin at position N1 catalyzed by anaAT. In Neosartorya fischeri (strain ATCC 1020 / DSM 3700 / CBS 544.65 / FGSC A1164 / JCM 1740 / NRRL 181 / WB 181) (Aspergillus fischerianus), this protein is O-acetyltransferase anaAT.